A 238-amino-acid chain; its full sequence is Cysteine-rich venom protein (238 aa).

The N-terminal stretch at Met1–Gly19 is a signal peptide. The region spanning Val38–Tyr164 is the SCP domain. Intrachain disulfides connect Cys75–Cys153, Cys92–Cys165, Cys148–Cys162, Cys184–Cys191, Cys187–Cys196, Cys200–Cys233, Cys209–Cys227, and Cys218–Cys231. Residues Cys200–Cys233 enclose the ShKT domain.

The protein belongs to the CRISP family. As to expression, expressed by the venom gland.

The protein localises to the secreted. Blocks contraction of smooth muscle elicited by high potassium-induced depolarization, but does not block caffeine-stimulated contraction. May target voltage-gated calcium channels on smooth muscle. In Austrelaps superbus (Lowland copperhead snake), this protein is Cysteine-rich venom protein.